Reading from the N-terminus, the 592-residue chain is Cryptochrome-2 (592 aa).

Residues 21–150 (ASSVHWFRKG…EVVTENSHTL (130 aa)) enclose the Photolyase/cryptochrome alpha/beta domain. Lys-29 is covalently cross-linked (Glycyl lysine isopeptide (Lys-Gly) (interchain with G-Cter in ubiquitin)). Position 89 is a phosphoserine (Ser-89). Residues Lys-125 and Lys-241 each participate in a glycyl lysine isopeptide (Lys-Gly) (interchain with G-Cter in ubiquitin) cross-link. Residue Ser-265 is modified to Phosphoserine; by MAPK. Ser-270 lines the FAD pocket. Ser-298 carries the post-translational modification Phosphoserine. Gln-307 lines the FAD pocket. A Glycyl lysine isopeptide (Lys-Gly) (interchain with G-Cter in ubiquitin) cross-link involves residue Lys-347. FAD-binding positions include His-373 and 405–407 (DAD). Positions 389 to 488 (WVSWESGVRV…IIGVDYPRPI (100 aa)) are required for inhibition of CLOCK-BMAL1-mediated transcription. Residues Lys-474 and Lys-503 each participate in a glycyl lysine isopeptide (Lys-Gly) (interchain with G-Cter in ubiquitin) cross-link. A disordered region spans residues 532-592 (VAEPGSSQAG…PTQEPASKDS (61 aa)). Over residues 536–547 (GSSQAGSISNTG) the composition is skewed to polar residues. Ser-553 is modified (phosphoserine; by GSK3-beta). Ser-557 is subject to Phosphoserine; by DYRK1A and MAPK. Residues 582–592 (MPTQEPASKDS) are compositionally biased toward polar residues.

This sequence belongs to the DNA photolyase class-1 family. In terms of assembly, component of the circadian core oscillator, which includes the CRY proteins, CLOCK or NPAS2, BMAL1 or BMAL2, CSNK1D and/or CSNK1E, TIMELESS, and the PER proteins. Interacts with TIMELESS. Interacts directly with PER1, PER2 and PER3; interaction with PER2 inhibits its ubiquitination and vice versa. Interacts with CLOCK-BMAL1. Interacts with BMAL1. Interacts with CLOCK. Interacts with NFIL3. Interacts with FBXL3 and FBXL21. FBXL3, PER2 and the cofactor FAD compete for overlapping binding sites. FBXL3 cannot bind CRY2 that interacts already with PER2 or that contains bound FAD. Interacts with PPP5C (via TPR repeats); the interaction down-regulates the PPP5C phosphatase activity on CSNK1E. Interacts with nuclear receptors AR and NR3C1/GR; the interaction is ligand dependent. Interacts with PRKDC. Interacts with CIART. Interacts with DDB1, USP7 and TARDBP. Interacts with HNF4A. Interacts with PPARA. Interacts with PPARG in a ligand-dependent manner. Interacts with PPARD (via domain NR LBD) in a ligand-dependent manner. Interacts with NR1I2 (via domain NR LBD) in a ligand-dependent manner. Interacts with NR1I3 and VDR in a ligand-dependent manner. It depends on FAD as a cofactor. (6R)-5,10-methylene-5,6,7,8-tetrahydrofolate serves as cofactor. Phosphorylation on Ser-265 by MAPK is important for the inhibition of CLOCK-BMAL1-mediated transcriptional activity. Phosphorylation by CSKNE requires interaction with PER1 or PER2. Phosphorylated in a circadian manner at Ser-553 and Ser-557 in the suprachiasmatic nucleus (SCN) and liver. Phosphorylation at Ser-557 by DYRK1A promotes subsequent phosphorylation at Ser-553 by GSK3-beta: the two-step phosphorylation at the neighboring Ser residues leads to its proteasomal degradation. In terms of processing, ubiquitinated by the SCF(FBXL3) and SCF(FBXL21) complexes, regulating the balance between degradation and stabilization. The SCF(FBXL3) complex is mainly nuclear and mediates ubiquitination and subsequent degradation of CRY2. In contrast, cytoplasmic SCF(FBXL21) complex-mediated ubiquitination leads to stabilize CRY2 and counteract the activity of the SCF(FBXL3) complex. The SCF(FBXL3) and SCF(FBXL21) complexes probably mediate ubiquitination at different Lys residues. The SCF(FBXL3) complex recognizes and binds CRY2 phosphorylated at Ser-553 and Ser-557. Ubiquitination may be inhibited by PER2. Deubiquitinated by USP7. Expression in the retina is restricted to the photoreceptor layer (at protein level). Expressed in all tissues examined including heart, brain, spleen, lung, liver, skeletal muscle, kidney and testis. Weak expression in spleen.

Its subcellular location is the cytoplasm. The protein resides in the nucleus. Its activity is regulated as follows. KL001 (N-[3-(9H-carbazol-9-yl)-2-hydroxypropyl]-N-(2-furanylmethyl)-methanesulfonamide) binds to CRY1 and stabilizes it by inhibiting FBXL3- and ubiquitin-dependent degradation of CRY1 resulting in lengthening of the circadian periods. KL001-mediated CRY1 stabilization can inhibit glucagon-induced gluconeogenesis in primary hepatocytes. Functionally, transcriptional repressor which forms a core component of the circadian clock. The circadian clock, an internal time-keeping system, regulates various physiological processes through the generation of approximately 24 hour circadian rhythms in gene expression, which are translated into rhythms in metabolism and behavior. It is derived from the Latin roots 'circa' (about) and 'diem' (day) and acts as an important regulator of a wide array of physiological functions including metabolism, sleep, body temperature, blood pressure, endocrine, immune, cardiovascular, and renal function. Consists of two major components: the central clock, residing in the suprachiasmatic nucleus (SCN) of the brain, and the peripheral clocks that are present in nearly every tissue and organ system. Both the central and peripheral clocks can be reset by environmental cues, also known as Zeitgebers (German for 'timegivers'). The predominant Zeitgeber for the central clock is light, which is sensed by retina and signals directly to the SCN. The central clock entrains the peripheral clocks through neuronal and hormonal signals, body temperature and feeding-related cues, aligning all clocks with the external light/dark cycle. Circadian rhythms allow an organism to achieve temporal homeostasis with its environment at the molecular level by regulating gene expression to create a peak of protein expression once every 24 hours to control when a particular physiological process is most active with respect to the solar day. Transcription and translation of core clock components (CLOCK, NPAS2, BMAL1, BMAL2, PER1, PER2, PER3, CRY1 and CRY2) plays a critical role in rhythm generation, whereas delays imposed by post-translational modifications (PTMs) are important for determining the period (tau) of the rhythms (tau refers to the period of a rhythm and is the length, in time, of one complete cycle). A diurnal rhythm is synchronized with the day/night cycle, while the ultradian and infradian rhythms have a period shorter and longer than 24 hours, respectively. Disruptions in the circadian rhythms contribute to the pathology of cardiovascular diseases, cancer, metabolic syndromes and aging. A transcription/translation feedback loop (TTFL) forms the core of the molecular circadian clock mechanism. Transcription factors, CLOCK or NPAS2 and BMAL1 or BMAL2, form the positive limb of the feedback loop, act in the form of a heterodimer and activate the transcription of core clock genes and clock-controlled genes (involved in key metabolic processes), harboring E-box elements (5'-CACGTG-3') within their promoters. The core clock genes: PER1/2/3 and CRY1/2 which are transcriptional repressors form the negative limb of the feedback loop and interact with the CLOCK|NPAS2-BMAL1|BMAL2 heterodimer inhibiting its activity and thereby negatively regulating their own expression. This heterodimer also activates nuclear receptors NR1D1/2 and RORA/B/G, which form a second feedback loop and which activate and repress BMAL1 transcription, respectively. CRY1 and CRY2 have redundant functions but also differential and selective contributions at least in defining the pace of the SCN circadian clock and its circadian transcriptional outputs. Less potent transcriptional repressor in cerebellum and liver than CRY1, though less effective in lengthening the period of the SCN oscillator. Seems to play a critical role in tuning SCN circadian period by opposing the action of CRY1. With CRY1, dispensable for circadian rhythm generation but necessary for the development of intercellular networks for rhythm synchrony. May mediate circadian regulation of cAMP signaling and gluconeogenesis by blocking glucagon-mediated increases in intracellular cAMP concentrations and in CREB1 phosphorylation. Besides its role in the maintenance of the circadian clock, is also involved in the regulation of other processes. Plays a key role in glucose and lipid metabolism modulation, in part, through the transcriptional regulation of genes involved in these pathways, such as LEP or ACSL4. Represses glucocorticoid receptor NR3C1/GR-induced transcriptional activity by binding to glucocorticoid response elements (GREs). Represses the CLOCK-BMAL1 induced transcription of BHLHE40/DEC1 and NAMPT. Represses PPARD and its target genes in the skeletal muscle and limits exercise capacity. Represses the transcriptional activity of NR1I2. The chain is Cryptochrome-2 (Cry2) from Mus musculus (Mouse).